Reading from the N-terminus, the 490-residue chain is MKLKESQQQSNRLSNEDLVPLGQEKRTWKAMNFASIWMGCIHNIPTYATVGGLIAIGLSPWQVLAIIITASLILFGALALNGHAGTKYGLPFPVIIRASYGIYGANIPALLRAFTAIMWLGIQTFAGSTALNILLLNMWPGWGEIGGEWNILGIHLSGLLSFVFFWAIHLLVLHHGMESIKRFEVWAGPLVYLVFGGMVWWAVDIAGGLGPIYSQPGKFHTFSETFWPFAAGVTGIIGIWATLILNIPDFTRFAETQKEQIKGQFYGLPGTFALFAFASITVTSGSQVAFGEPIWDVVDILARFDNPYVIVLSVITLCIATISVNVAANIVSPAYDIANALPKYINFKRGSFITALLALFTVPWKLMESATSVYAFLGLIGGMLGPVAGVMMADYFIIRKRELSVDDLYSETGRYVYWKGYNYRAFAATMLGALISLIGMYVPVLKSLYDISWFVGVLISFLFYIVLMRVHPPASLAIETVEHAQVRQAE.

A run of 12 helical transmembrane segments spans residues 36-56 (IWMGCIHNIPTYATVGGLIAI), 60-80 (PWQVLAIIITASLILFGALAL), 116-136 (AIMWLGIQTFAGSTALNILLL), 151-171 (ILGIHLSGLLSFVFFWAIHLL), 190-210 (LVYLVFGGMVWWAVDIAGGLG), 225-245 (TFWPFAAGVTGIIGIWATLIL), 265-285 (FYGLPGTFALFAFASITVTSG), 308-328 (YVIVLSVITLCIATISVNVAA), 350-370 (GSFITALLALFTVPWKLMESA), 373-393 (VYAFLGLIGGMLGPVAGVMMA), 425-445 (AFAATMLGALISLIGMYVPVL), and 448-468 (LYDISWFVGVLISFLFYIVLM).

Belongs to the purine-cytosine permease (2.A.39) family.

The protein resides in the cell membrane. It carries out the reaction (S)-allantoin(in) + H(+)(in) = (S)-allantoin(out) + H(+)(out). Its function is as follows. Uptake of allantoin into the cell. Allantoin uptake is not dependent on sodium, and PucI is likely to be a proton-coupled symporter. Shows highest recognition for binding of allantoin, good recognition for binding of hydantoin, L-5-benzylhydantoin and 5-hydroxyhydantoin, and to a lesser extent for a range of nucleobases and nucleosides. The polypeptide is Allantoin permease (Bacillus subtilis (strain 168)).